A 229-amino-acid chain; its full sequence is Germin-like protein 12-1 (229 aa).

Positions 1–22 (MASSNFFLPTALIALVATQAMA) are cleaved as a signal peptide. A disulfide bridge connects residues cysteine 32 and cysteine 47. Positions 62–217 (ANLDKPMDTT…AFQVDKKAVD (156 aa)) constitute a Cupin type-1 domain. Asparagine 78 carries N-linked (GlcNAc...) asparagine glycosylation. Positions 111, 113, 118, and 162 each coordinate Mn(2+).

The protein belongs to the germin family. As to quaternary structure, oligomer (believed to be a pentamer but probably hexamer).

Its subcellular location is the secreted. It is found in the extracellular space. The protein localises to the apoplast. Its function is as follows. May play a role in plant defense. Probably has no oxalate oxidase activity even if the active site is conserved. In Oryza sativa subsp. japonica (Rice), this protein is Germin-like protein 12-1.